The chain runs to 198 residues: Superoxide dismutase [Fe] (198 aa).

The Fe cation site is built by histidine 27, histidine 74, aspartate 157, and histidine 161.

This sequence belongs to the iron/manganese superoxide dismutase family. In terms of assembly, homodimer. Requires Fe cation as cofactor.

The catalysed reaction is 2 superoxide + 2 H(+) = H2O2 + O2. In terms of biological role, destroys superoxide anion radicals which are normally produced within the cells and which are toxic to biological systems. The polypeptide is Superoxide dismutase [Fe] (sodB) (Pseudomonas putida (strain ATCC 47054 / DSM 6125 / CFBP 8728 / NCIMB 11950 / KT2440)).